A 187-amino-acid chain; its full sequence is Protein GrpE (187 aa).

Positions M1–N30 are disordered.

The protein belongs to the GrpE family. In terms of assembly, homodimer.

The protein localises to the cytoplasm. Functionally, participates actively in the response to hyperosmotic and heat shock by preventing the aggregation of stress-denatured proteins, in association with DnaK and GrpE. It is the nucleotide exchange factor for DnaK and may function as a thermosensor. Unfolded proteins bind initially to DnaJ; upon interaction with the DnaJ-bound protein, DnaK hydrolyzes its bound ATP, resulting in the formation of a stable complex. GrpE releases ADP from DnaK; ATP binding to DnaK triggers the release of the substrate protein, thus completing the reaction cycle. Several rounds of ATP-dependent interactions between DnaJ, DnaK and GrpE are required for fully efficient folding. The polypeptide is Protein GrpE (Borreliella burgdorferi (strain ATCC 35210 / DSM 4680 / CIP 102532 / B31) (Borrelia burgdorferi)).